A 154-amino-acid chain; its full sequence is Low molecular weight protein-tyrosine-phosphatase PtpA (154 aa).

Cys8 serves as the catalytic Nucleophile. Residue Arg14 is part of the active site. Asp120 serves as the catalytic Proton donor.

This sequence belongs to the low molecular weight phosphotyrosine protein phosphatase family. As to quaternary structure, interacts with host CORO1A. Post-translationally, phosphorylations at Tyr-122 and Tyr-123 are essential for phosphatase activity.

The protein localises to the secreted. The enzyme catalyses O-phospho-L-tyrosyl-[protein] + H2O = L-tyrosyl-[protein] + phosphate. Secreted tyrosine phosphatase that plays a critical role during infection as a bacterial effector protein that counteracts host defenses. Required for intramacrophage survival. The chain is Low molecular weight protein-tyrosine-phosphatase PtpA (ptpA) from Staphylococcus aureus (strain bovine RF122 / ET3-1).